A 144-amino-acid polypeptide reads, in one-letter code: Large ribosomal subunit protein uL15 (144 aa).

Positions 1 to 52 (MRLNTLSPAEGAKHSAKRLGRGIGSGLGKTGGRGHKGQKSRTGSGVRRGFEG) are disordered. A compositionally biased stretch (gly residues) spans 21–31 (RGIGSGLGKTG).

The protein belongs to the universal ribosomal protein uL15 family. As to quaternary structure, part of the 50S ribosomal subunit.

Functionally, binds to the 23S rRNA. This Haemophilus influenzae (strain 86-028NP) protein is Large ribosomal subunit protein uL15.